We begin with the raw amino-acid sequence, 379 residues long: Putative 8-amino-7-oxononanoate synthase (379 aa).

Position 21 (Arg-21) interacts with substrate. A pyridoxal 5'-phosphate-binding site is contributed by 97 to 98 (GY). His-122 contacts substrate. Pyridoxal 5'-phosphate is bound by residues Ser-169, 194-197 (DDAH), and 223-226 (TLSK). N6-(pyridoxal phosphate)lysine is present on Lys-226. Substrate is bound at residue Thr-340.

It belongs to the class-II pyridoxal-phosphate-dependent aminotransferase family. BioF subfamily. Homodimer. Pyridoxal 5'-phosphate is required as a cofactor.

The enzyme catalyses 6-carboxyhexanoyl-[ACP] + L-alanine + H(+) = (8S)-8-amino-7-oxononanoate + holo-[ACP] + CO2. It functions in the pathway cofactor biosynthesis; biotin biosynthesis. Catalyzes the decarboxylative condensation of pimeloyl-[acyl-carrier protein] and L-alanine to produce 8-amino-7-oxononanoate (AON), [acyl-carrier protein], and carbon dioxide. This Bacillus licheniformis (strain ATCC 14580 / DSM 13 / JCM 2505 / CCUG 7422 / NBRC 12200 / NCIMB 9375 / NCTC 10341 / NRRL NRS-1264 / Gibson 46) protein is Putative 8-amino-7-oxononanoate synthase (bioF).